The primary structure comprises 472 residues: L-fuculokinase (472 aa).

The protein belongs to the FGGY kinase family. A divalent metal cation is required as a cofactor.

The catalysed reaction is L-fuculose + ATP = L-fuculose 1-phosphate + ADP + H(+). It participates in carbohydrate degradation; L-fucose degradation; L-lactaldehyde and glycerone phosphate from L-fucose: step 2/3. Its function is as follows. Catalyzes the phosphorylation of L-fuculose. The polypeptide is L-fuculokinase (Escherichia coli O157:H7).